Reading from the N-terminus, the 350-residue chain is uncharacterized protein (350 aa).

3 consecutive transmembrane segments (helical) span residues 10–30, 51–71, and 327–347; these read YSFI…EVIG, FAGI…VTLT, and ILSL…LKLF.

This sequence belongs to the 1-acyl-sn-glycerol-3-phosphate acyltransferase family.

The protein resides in the endoplasmic reticulum membrane. This is an uncharacterized protein from Schizosaccharomyces pombe (strain 972 / ATCC 24843) (Fission yeast).